The following is a 74-amino-acid chain: MIGLIVVPILFAIKGIVVGVQKVKKKFGKHSNTKDQKEDKDEDKRQSISQRKQHTEWPIEENRIQRRAPNQSAL.

The signal sequence occupies residues 1–19; sequence MIGLIVVPILFAIKGIVVG. Residues 26 to 74 are disordered; that stretch reads KFGKHSNTKDQKEDKDEDKRQSISQRKQHTEWPIEENRIQRRAPNQSAL. 2 stretches are compositionally biased toward basic and acidic residues: residues 32–46 and 53–64; these read NTKD…DKRQ and QHTEWPIEENRI.

This is an uncharacterized protein from Saccharomyces cerevisiae (strain ATCC 204508 / S288c) (Baker's yeast).